The primary structure comprises 339 residues: UDP-glucose 4-epimerase (339 aa).

NAD(+) is bound by residues 10-12, 31-35, 58-59, F80, and K84; these read GYI, DNLSN, and DL. 124 to 126 lines the substrate pocket; that stretch reads SAT. Y148 functions as the Proton acceptor in the catalytic mechanism. K152 and Y176 together coordinate NAD(+). Substrate is bound by residues 176–178, 197–199, R230, and 291–294; these read YFN, NNL, and RPGD.

This sequence belongs to the NAD(P)-dependent epimerase/dehydratase family. The cofactor is NAD(+).

It catalyses the reaction UDP-alpha-D-glucose = UDP-alpha-D-galactose. The catalysed reaction is UDP-N-acetyl-alpha-D-glucosamine = UDP-N-acetyl-alpha-D-galactosamine. The protein operates within cell wall biogenesis; teichoic acid biosynthesis. Catalyzes two distinct but analogous reactions: the reversible epimerization of UDP-glucose to UDP-galactose and the reversible epimerization of UDP-N-acetylglucosamine to UDP-N-acetylgalactosamine. The enzyme is more efficient in catalyzing the interconversion between unacetylated than between corresponding N-acetylated substrates. Essential for growth in media containing either glucose or galactose. May protect the cell from the toxic effects of galactose and glucose or derivatives of both sugars. Involved in the biosynthesis of teichoic acids via the formation of UDP-N-acetylgalactosamine. Influences cell division. The sequence is that of UDP-glucose 4-epimerase from Bacillus subtilis (strain 168).